The chain runs to 251 residues: Elongation factor Ts (251 aa).

The segment at 82–85 is involved in Mg(2+) ion dislocation from EF-Tu; it reads TDFV. The segment at 215–251 is disordered; sequence QMGQKAPEPVAAAPQVEEKAPEPAAKDNPPAKGKKKK. A compositionally biased stretch (low complexity) spans 219–229; sequence KAPEPVAAAPQ. A compositionally biased stretch (basic and acidic residues) spans 230-239; the sequence is VEEKAPEPAA.

Belongs to the EF-Ts family.

Its subcellular location is the cytoplasm. In terms of biological role, associates with the EF-Tu.GDP complex and induces the exchange of GDP to GTP. It remains bound to the aminoacyl-tRNA.EF-Tu.GTP complex up to the GTP hydrolysis stage on the ribosome. The protein is Elongation factor Ts of Microcystis aeruginosa (strain NIES-843 / IAM M-2473).